Reading from the N-terminus, the 195-residue chain is SPI-2 type 3 secretion system translocon protein SctB (195 aa).

Residues 44 to 80 (KLMELAKKLRDIMRSYNVEKQRLAWELQVNVLQTQMK) are a coiled coil. A run of 3 helical transmembrane segments spans residues 90–110 (MITAGGAMLSGVLTIGLGAVG), 115–135 (LIAGQAVGHTAGGVMGLGAGV), and 170–190 (EIMQQIIGVGSSLVTVLAEIL).

The protein belongs to the SctB/EspB family. In terms of assembly, the core secretion machinery of the T3SS is composed of approximately 20 different proteins, including cytoplasmic components, a base, an export apparatus and a needle. This subunit is involved in the formation of a pore, called the translocon, in host membrane. May form a complex with SseB and SseC/SctE2. SseB is required for correct localization of SseD/SctB2 on the bacterial cell surface. Binds to the chaperone SseA.

The protein resides in the secreted. Its subcellular location is the cell surface. The protein localises to the host membrane. Component of the type III secretion system 2 (SPI-2 T3SS), also called injectisome, which is used to inject bacterial effector proteins into eukaryotic host cells. SseC/SctE2 and SseD/SctB2 are inserted into the host membrane where they form a pore and allow the translocation of effector proteins into the cytosol of target cells. Its function is as follows. Required for the translocation of SPI-2 effector proteins. Required for systemic Salmonella infection of the mouse. Essential for SpvB-induced actin depolymerization in the host cell cytoplasm. This Salmonella typhimurium (strain LT2 / SGSC1412 / ATCC 700720) protein is SPI-2 type 3 secretion system translocon protein SctB.